Consider the following 448-residue polypeptide: MSDNVPTIAAVATAPGRGGVGVIRISGKNLLPMAQALCGKTPKPRTATYADFTDTDGQAIDSGLLLFFAAPASFTGEDVIELQGHGGPVVMDMLLNRCLELGARLAEPGEFTKRAFLNDKLDLAQAEGVADLIDASSRSAARLALRSLKGDFSRRIHGLVEDLITLRMLVEATLDFPEEDIDFLEAADARGKLDGLRRAVDDVLANAQQGAILREGLNVVLVGAPNVGKSSLLNALAGDEVAIVTDIAGTTRDAVRERILIDGVPVHIVDTAGLRETDDVVERIGIERSRKAVSEADVALVLVDPREGLNEKTRAILDALPPELKRIEIHSKSDLHAHAAGGFGTGAETVIALSAKTGDGLDALKRTLLREAGWQGESEGLFLARTRHVNALKAAQEELSLAALCGNHQIELFAEHLRLAQVACGEITGEFTADDLLGVIFSRFCIGK.

Positions 24, 81, and 120 each coordinate (6S)-5-formyl-5,6,7,8-tetrahydrofolate. Residues 216 to 373 form the TrmE-type G domain; that stretch reads GLNVVLVGAP…LKRTLLREAG (158 aa). Asn226 contributes to the K(+) binding site. Residues 226–231, 245–251, and 270–273 contribute to the GTP site; these read NVGKSS, TDIAGTT, and DTAG. Ser230 is a Mg(2+) binding site. The K(+) site is built by Thr245, Ile247, and Thr250. Mg(2+) is bound at residue Thr251. Lys448 contributes to the (6S)-5-formyl-5,6,7,8-tetrahydrofolate binding site.

The protein belongs to the TRAFAC class TrmE-Era-EngA-EngB-Septin-like GTPase superfamily. TrmE GTPase family. In terms of assembly, homodimer. Heterotetramer of two MnmE and two MnmG subunits. K(+) serves as cofactor.

It is found in the cytoplasm. Exhibits a very high intrinsic GTPase hydrolysis rate. Involved in the addition of a carboxymethylaminomethyl (cmnm) group at the wobble position (U34) of certain tRNAs, forming tRNA-cmnm(5)s(2)U34. In Neisseria meningitidis serogroup B (strain ATCC BAA-335 / MC58), this protein is tRNA modification GTPase MnmE.